The chain runs to 262 residues: MANFSPLTVFISVTSLAVFQFLFHVGSSWLSTRLTGGFHKLSARQKIEWNSRTVSSFHALVVGCFCLYILVYDDAVNADPVWGDPFMVKLNVAVTSGYLISDLLLIIYYWKEIGDKYFVTHHLAALYACYYVLGEGMLPYFGNFRLIAEFSTPFVNQRWFFEVLGYSKYSLPNMVNGVLMTISFFIVRIAVIPIYYGRVFSTFGTEAFHRLGLGAQCAWIISSVSLDIMNVMWMIKIAKGCYKVLYHRDGKLTKTQNNGKLE.

The next 6 helical transmembrane spans lie at 6–26, 53–73, 90–110, 122–142, 177–197, and 218–238; these read PLTV…FHVG, TVSS…LVYD, LNVA…IYYW, HLAA…PYFG, GVLM…IYYG, and AWII…IKIA. Positions 44 to 246 constitute a TLC domain; that stretch reads RQKIEWNSRT…IAKGCYKVLY (203 aa).

The protein belongs to the TLCD4 family.

The protein resides in the membrane. This chain is TLC domain-containing protein 4-B (tlcd4-b), found in Xenopus laevis (African clawed frog).